Consider the following 854-residue polypeptide: uncharacterized protein (854 aa).

It belongs to the PEP-utilizing enzyme family.

This is an uncharacterized protein from Mycobacterium tuberculosis (strain CDC 1551 / Oshkosh).